Consider the following 375-residue polypeptide: 4,4'-diaponeurosporenoate glycosyltransferase (375 aa).

4 helical membrane-spanning segments follow: residues 7-23, 112-132, 280-300, and 333-353; these read LLHA…YLMY, ACYL…DADV, IMML…GLAL, and FSIL…LVYI.

It belongs to the glycosyltransferase 2 family. CrtQ subfamily.

It is found in the cell membrane. It functions in the pathway carotenoid biosynthesis; staphyloxanthin biosynthesis; staphyloxanthin from farnesyl diphosphate: step 4/5. In terms of biological role, catalyzes the glycosylation of 4,4'-diaponeurosporenoate, i.e. the esterification of glucose at the C1'' position with the carboxyl group of 4,4'-diaponeurosporenic acid, to form glycosyl-4,4'-diaponeurosporenoate. This is a step in the biosynthesis of staphyloxanthin, an orange pigment present in most staphylococci strains. The sequence is that of 4,4'-diaponeurosporenoate glycosyltransferase (crtQ) from Staphylococcus haemolyticus (strain JCSC1435).